The sequence spans 1642 residues: Cholesterol transporter ABCA5 (1642 aa).

Residues 32–52 (SVQEILFPLFFLFWLILISMM) traverse the membrane as a helical segment. N-linked (GlcNAc...) asparagine glycosylation occurs at Asn86. The next 6 membrane-spanning stretches (helical) occupy residues 220 to 240 (VILI…AIHI), 264 to 284 (LSWV…MAVI), 297 to 317 (IVIF…ALML), 328 to 348 (GIVE…IILI), 355 to 375 (LVWL…AQVM), and 396 to 416 (LIIT…LAVY). N-linked (GlcNAc...) asparagine glycosylation occurs at Asn458. One can recognise an ABC transporter 1 domain in the interval 478–713 (IRISGIQKTY…WGIGYRLSMY (236 aa)). ATP is bound at residue 514–521 (GHSGTGKS). 2 consecutive transmembrane segments (helical) span residues 866 to 886 (LLLL…HHSF) and 967 to 987 (VFAA…VNII). A glycan (N-linked (GlcNAc...) asparagine) is linked at Asn996. 6 helical membrane-spanning segments follow: residues 1021 to 1041 (LYFQ…YFAM), 1071 to 1091 (VVDI…LLAF), 1102 to 1122 (FLAV…FTYI), 1139 to 1159 (FIYS…FFMG), 1169 to 1189 (AFCI…FIKI), and 1207 to 1227 (LSVA…LLQY). The interval 1249–1268 (KSKNRKLPEPPDNEDEDEDV) is disordered. Positions 1259–1268 (PDNEDEDEDV) are enriched in acidic residues. The region spanning 1290 to 1533 (IMVSNLHKEY…FGKGYFLEIK (244 aa)) is the ABC transporter 2 domain. 1333–1340 (GPNGAGKS) lines the ATP pocket.

Belongs to the ABC transporter superfamily. ABCA family. N-glycosylated. Ubiquitously expressed. Highly expressed in testis, skeletal muscle, kidney, liver and placenta. Expressed in both the epithelial and mesenchymal compartments, present within the outer root sheath (ORS) of the hair follicle as well as dermal sheath. Expressed in multiple regions of the brain, including the hippocampus, superior frontal and inferior temporal cortices. Strongly expressed in neurons and moderately in microglia, with only weak expression in astrocytes and oligodendrocytes.

It localises to the golgi apparatus membrane. The protein resides in the lysosome membrane. Its subcellular location is the late endosome membrane. The protein localises to the cell membrane. The catalysed reaction is cholesterol(in) + ATP + H2O = cholesterol(out) + ADP + phosphate + H(+). Cholesterol efflux transporter in macrophages that is responsible for APOAI/high-density lipoproteins (HDL) formation at the plasma membrane under high cholesterol levels and participates in reverse cholesterol transport. May play a role in the processing of autolysosomes. This Homo sapiens (Human) protein is Cholesterol transporter ABCA5.